The chain runs to 440 residues: ATP-dependent protease ATPase subunit HslU (440 aa).

ATP contacts are provided by residues I18 and 60–65 (GVGKTE). A disordered region spans residues 138–159 (RAQSFDQEDPSAGTRQKLRKKL). Residues D252, E318, and R390 each contribute to the ATP site.

Belongs to the ClpX chaperone family. HslU subfamily. A double ring-shaped homohexamer of HslV is capped on each side by a ring-shaped HslU homohexamer. The assembly of the HslU/HslV complex is dependent on binding of ATP.

It is found in the cytoplasm. In terms of biological role, ATPase subunit of a proteasome-like degradation complex; this subunit has chaperone activity. The binding of ATP and its subsequent hydrolysis by HslU are essential for unfolding of protein substrates subsequently hydrolyzed by HslV. HslU recognizes the N-terminal part of its protein substrates and unfolds these before they are guided to HslV for hydrolysis. This chain is ATP-dependent protease ATPase subunit HslU, found in Alkalilimnicola ehrlichii (strain ATCC BAA-1101 / DSM 17681 / MLHE-1).